The primary structure comprises 113 residues: U11-theraphotoxin-Hhn1l (113 aa).

A signal peptide spans 1–21 (MNTGRVTFLVVFLVAVSLGPA). The propeptide occupies 22 to 74 (DKEENPMEMQEKTQQGKNYLNFGENLVVPKLEELKAKLVEKESKKSKNSRQKR). 2 disulfide bridges follow: C82/C95 and C89/C110.

The protein belongs to the neurotoxin 14 (magi-1) family. 01 (HNTX-16) subfamily. In terms of tissue distribution, expressed by the venom gland.

Its subcellular location is the secreted. In terms of biological role, probable ion channel inhibitor. This is U11-theraphotoxin-Hhn1l from Cyriopagopus hainanus (Chinese bird spider).